The primary structure comprises 363 residues: MSTSKTITFTLFIAALLSSCDAATNATSQPLFPAILIFGDSTVDTGNNNYHSQTIFKAKHLPYGIDLPNHKASGRFTNGKIFSDIIATKLNIKQFVPPFLQPNLSDQEIVTGVCFASAGAGYDDHTSLSTQAIRVLDQQKMFKNYIARLKSIVGDKKAMEIIKNALVVISAGPNDFILNYYDIPSRRLEFPHISGYQDFVLQRLDNFVRELYSLGCRKIMVGGLPPMGCLPIQMTAKFRNALRFCLEQENRDSVLYNQKLQNLLPQIEASLTGSKILYSNVYDPMMDMMQNPSKYGFKETKRGCCGTGHLETSFMCNAFSPTCRNHSEFLFFDSIHPSEATYNYMGNFLDTQIRVWLSLRLKS.

A signal peptide spans 1–22; the sequence is MSTSKTITFTLFIAALLSSCDA. Asparagine 25 is a glycosylation site (N-linked (GlcNAc...) asparagine). Catalysis depends on serine 41, which acts as the Nucleophile. N-linked (GlcNAc...) asparagine glycosylation is found at asparagine 103 and asparagine 325. Residues aspartate 333 and histidine 336 contribute to the active site.

Belongs to the 'GDSL' lipolytic enzyme family.

Its subcellular location is the secreted. This chain is GDSL esterase/lipase At2g24560, found in Arabidopsis thaliana (Mouse-ear cress).